A 310-amino-acid chain; its full sequence is Methionyl-tRNA formyltransferase (310 aa).

109–112 serves as a coordination point for (6S)-5,6,7,8-tetrahydrofolate; sequence SLLP.

Belongs to the Fmt family.

The enzyme catalyses L-methionyl-tRNA(fMet) + (6R)-10-formyltetrahydrofolate = N-formyl-L-methionyl-tRNA(fMet) + (6S)-5,6,7,8-tetrahydrofolate + H(+). Functionally, attaches a formyl group to the free amino group of methionyl-tRNA(fMet). The formyl group appears to play a dual role in the initiator identity of N-formylmethionyl-tRNA by promoting its recognition by IF2 and preventing the misappropriation of this tRNA by the elongation apparatus. The chain is Methionyl-tRNA formyltransferase from Agathobacter rectalis (strain ATCC 33656 / DSM 3377 / JCM 17463 / KCTC 5835 / VPI 0990) (Eubacterium rectale).